We begin with the raw amino-acid sequence, 486 residues long: Serine/threonine-protein phosphatase 2A 56 kDa regulatory subunit alpha isoform (486 aa).

Residues 1 to 18 (MSSSSPPAGAASAAISAS) show a composition bias toward low complexity. The disordered stretch occupies residues 1–52 (MSSSSPPAGAASAAISASEKVDGFTRKSVRKAQRQKRSQGSSQFRSQGSQAE). Ser2 carries the post-translational modification N-acetylserine. Over residues 27 to 37 (KSVRKAQRQKR) the composition is skewed to basic residues. A compositionally biased stretch (low complexity) spans 38 to 51 (SQGSSQFRSQGSQA). A phosphoserine mark is found at Ser41, Ser42, and Ser49.

Belongs to the phosphatase 2A regulatory subunit B56 family. As to quaternary structure, PP2A consists of a common heterodimeric core enzyme, composed of a 36 kDa catalytic subunit (subunit C) and a 65 kDa constant regulatory subunit (PR65 or subunit A), that associates with a variety of regulatory subunits. Proteins that associate with the core dimer include three families of regulatory subunits B (the R2/B/PR55/B55, R3/B''/PR72/PR130/PR59 and R5/B'/B56 families), the 48 kDa variable regulatory subunit, viral proteins, and cell signaling molecules. Interacts with SGO1. Phosphorylated on serine residues. In terms of tissue distribution, widely expressed with the highest expression in heart and skeletal muscle.

It is found in the cytoplasm. The protein resides in the nucleus. It localises to the chromosome. Its subcellular location is the centromere. Its function is as follows. The B regulatory subunit might modulate substrate selectivity and catalytic activity, and might also direct the localization of the catalytic enzyme to a particular subcellular compartment. The polypeptide is Serine/threonine-protein phosphatase 2A 56 kDa regulatory subunit alpha isoform (PPP2R5A) (Homo sapiens (Human)).